Reading from the N-terminus, the 253-residue chain is Electron transfer flavoprotein subunit beta, mitochondrial (253 aa).

It belongs to the ETF beta-subunit/FixA family. In terms of assembly, heterodimer of an alpha and a beta subunit. Requires FAD as cofactor. AMP is required as a cofactor.

The protein resides in the mitochondrion matrix. The electron transfer flavoprotein serves as a specific electron acceptor for several dehydrogenases, including five acyl-CoA dehydrogenases, glutaryl-CoA and sarcosine dehydrogenase. It transfers the electrons to the main mitochondrial respiratory chain via ETF-ubiquinone oxidoreductase (ETF dehydrogenase). This is Electron transfer flavoprotein subunit beta, mitochondrial (ETFB) from Oryza sativa subsp. indica (Rice).